The following is a 73-amino-acid chain: Omega-hexatoxin-Ar1b (73 aa).

An N-terminal signal peptide occupies residues 1-22; that stretch reads MNTATGFIVLLVLATVLGCIEA. A propeptide spanning residues 23–37 is cleaved from the precursor; the sequence is GESHVREDAMGRARR. Disulfide bonds link C40–C54, C47–C58, and C53–C72.

This sequence belongs to the neurotoxin 08 (Shiva) family. 01 (omega toxin) subfamily. As to expression, expressed by the venom gland.

It is found in the secreted. Functionally, insecticidal toxin that reversibly and voltage-independently blocks both mid-low- (M-LVA) and high-voltage-activated (HVA) calcium channels (Cav) in cockroach DUM neurons. Also causes a modest block of insect sodium channel currents (Nav). Induces potent excitatory symptoms, followed by flaccid paralysis leading to death in house crickets. The sequence is that of Omega-hexatoxin-Ar1b from Atrax robustus (Sydney funnel-web spider).